A 274-amino-acid polypeptide reads, in one-letter code: Thiamine kinase (274 aa).

It belongs to the thiamine kinase family.

It carries out the reaction thiamine + ATP = thiamine phosphate + ADP + H(+). It participates in cofactor biosynthesis; thiamine diphosphate biosynthesis; thiamine phosphate from thiamine: step 1/1. Its function is as follows. Catalyzes the ATP-dependent phosphorylation of thiamine to thiamine phosphate. Is involved in thiamine salvage. This Salmonella typhimurium (strain LT2 / SGSC1412 / ATCC 700720) protein is Thiamine kinase.